The following is a 163-amino-acid chain: Protein-export protein SecB (163 aa).

Belongs to the SecB family. As to quaternary structure, homotetramer, a dimer of dimers. One homotetramer interacts with 1 SecA dimer.

It is found in the cytoplasm. One of the proteins required for the normal export of preproteins out of the cell cytoplasm. It is a molecular chaperone that binds to a subset of precursor proteins, maintaining them in a translocation-competent state. It also specifically binds to its receptor SecA. The protein is Protein-export protein SecB of Azotobacter vinelandii (strain DJ / ATCC BAA-1303).